Reading from the N-terminus, the 79-residue chain is UPF0180 protein BCB4264_A1446 (79 aa).

This sequence belongs to the UPF0180 family.

This Bacillus cereus (strain B4264) protein is UPF0180 protein BCB4264_A1446.